The primary structure comprises 354 residues: Protein Wnt-11 (354 aa).

The signal sequence occupies residues 1–24; sequence MKPSPQFLLAAFLSLILQTGICYG. 2 N-linked (GlcNAc...) asparagine glycosylation sites follow: N40 and N90. 11 cysteine pairs are disulfide-bonded: C80/C91, C130/C138, C140/C157, C209/C223, C211/C218, C283/C314, C299/C309, C313/C353, C329/C344, C331/C341, and C336/C337. S215 carries the O-palmitoleoyl serine; by PORCN lipid modification. Residues N300 and N304 are each glycosylated (N-linked (GlcNAc...) asparagine).

Belongs to the Wnt family. Palmitoleoylation is required for efficient binding to frizzled receptors. Depalmitoleoylation leads to Wnt signaling pathway inhibition.

It localises to the secreted. The protein resides in the extracellular space. The protein localises to the extracellular matrix. In terms of biological role, ligand for members of the frizzled family of seven transmembrane receptors. May play a role in the formation of dermal structure, both limb and feather buds. Is likely to signal over only few cell diameters. In Coturnix japonica (Japanese quail), this protein is Protein Wnt-11 (WNT11).